The primary structure comprises 336 residues: Acetaldehyde dehydrogenase 1 (336 aa).

32 to 35 (SGVV) contributes to the NAD(+) binding site. Cysteine 150 serves as the catalytic Acyl-thioester intermediate. Asparagine 309 lines the NAD(+) pocket.

This sequence belongs to the acetaldehyde dehydrogenase family.

It carries out the reaction acetaldehyde + NAD(+) + CoA = acetyl-CoA + NADH + H(+). The polypeptide is Acetaldehyde dehydrogenase 1 (mhpF) (Mycobacterium ulcerans (strain Agy99)).